Consider the following 553-residue polypeptide: Putative transport protein YidE (553 aa).

A run of 5 helical transmembrane segments spans residues 4-24 (IALT…IGNI), 28-48 (GVGF…HFVD), 65-85 (FGLI…FFAS), 95-115 (LFAV…HKIF), and 158-178 (MSYA…MWLM). 2 consecutive RCK C-terminal domains span residues 192 to 276 (KHES…VIGK) and 279 to 361 (DTSL…VVGN). 6 consecutive transmembrane segments (helical) span residues 371–391 (MLPV…PLFV), 393–413 (GFPV…ALIL), 437–457 (LGIV…FVDT), 464–484 (LSWI…VGLL), 493–513 (YLTL…LAFA), and 533–553 (LVMF…WGMG).

The protein belongs to the AAE transporter (TC 2.A.81) family. YidE subfamily.

The protein resides in the cell membrane. The polypeptide is Putative transport protein YidE (Salmonella newport (strain SL254)).